Reading from the N-terminus, the 37-residue chain is Large ribosomal subunit protein bL36 (37 aa).

This sequence belongs to the bacterial ribosomal protein bL36 family.

The protein is Large ribosomal subunit protein bL36 of Rippkaea orientalis (strain PCC 8801 / RF-1) (Cyanothece sp. (strain PCC 8801)).